Consider the following 149-residue polypeptide: Large ribosomal subunit protein bL9 (149 aa).

This sequence belongs to the bacterial ribosomal protein bL9 family.

In terms of biological role, binds to the 23S rRNA. The sequence is that of Large ribosomal subunit protein bL9 from Actinobacillus succinogenes (strain ATCC 55618 / DSM 22257 / CCUG 43843 / 130Z).